We begin with the raw amino-acid sequence, 32 residues long: ATP synthase 28 kDa subunit, mitochondrial (32 aa).

It localises to the mitochondrion. The protein localises to the mitochondrion inner membrane. Mitochondrial membrane ATP synthase (F(1)F(0) ATP synthase or Complex V) produces ATP from ADP in the presence of a proton gradient across the membrane which is generated by electron transport complexes of the respiratory chain. F-type ATPases consist of two structural domains, F(1) - containing the extramembraneous catalytic core and F(0) - containing the membrane proton channel, linked together by a central stalk and a peripheral stalk. During catalysis, ATP synthesis in the catalytic domain of F(1) is coupled via a rotary mechanism of the central stalk subunits to proton translocation. Part of the complex F(0) domain. The chain is ATP synthase 28 kDa subunit, mitochondrial from Spinacia oleracea (Spinach).